The sequence spans 2360 residues: DNA (cytosine-5-)-methyltransferase DMT5 (2360 aa).

The SAM-dependent MTase C5-type domain occupies 48–507; sequence FTVGTMCSGT…LCILIAERQV (460 aa). Cysteine 146 is an active-site residue. A Helicase ATP-binding domain is found at 1258–1575; sequence AEVVNRARGG…CAIADLVNMH (318 aa). 1271-1278 contributes to the ATP binding site; it reads HDVGFGKT. Residues 1451-1498 are disordered; sequence SRRKDQKSKATARTQRAKKKSKKPRRTAAAAAESDHSAESDSDSAMDD. Residues 1465–1476 show a composition bias toward basic residues; it reads QRAKKKSKKPRR. Residues 2018–2070 form an RING-type; degenerate zinc finger; it reads CSVCGSQDNTEMKDLSLFITCGHLLCSGCVAAHEHQHGQAESTTGEVLCPVDS. The 166-residue stretch at 2102 to 2267 folds into the Helicase C-terminal domain; sequence KVMKILDVIR…RMPLDDLDYK (166 aa).

This sequence in the N-terminal section; belongs to the class I-like SAM-binding methyltransferase superfamily. C5-methyltransferase family. The protein in the C-terminal section; belongs to the SNF2/RAD54 helicase family.

It is found in the nucleus. The protein localises to the chromosome. It carries out the reaction a 2'-deoxycytidine in DNA + S-adenosyl-L-methionine + ATP + H2O = a 5-methyl-2'-deoxycytidine in DNA + S-adenosyl-L-homocysteine + ADP + phosphate + 2 H(+). Functionally, may play a role in cytosine methylation at palindromic 5'-CG-3' and 5'-C[ACT]G-3' sites in DNA. The polypeptide is DNA (cytosine-5-)-methyltransferase DMT5 (Verticillium dahliae (strain VdLs.17 / ATCC MYA-4575 / FGSC 10137) (Verticillium wilt)).